A 132-amino-acid polypeptide reads, in one-letter code: Small ribosomal subunit protein uS8c (132 aa).

The protein belongs to the universal ribosomal protein uS8 family. Part of the 30S ribosomal subunit.

It localises to the plastid. The protein localises to the chloroplast. Its function is as follows. One of the primary rRNA binding proteins, it binds directly to 16S rRNA central domain where it helps coordinate assembly of the platform of the 30S subunit. The protein is Small ribosomal subunit protein uS8c (rps8) of Psilotum nudum (Whisk fern).